Reading from the N-terminus, the 95-residue chain is Complement inhibitor RaCI5 (95 aa).

The N-terminal stretch at 1 to 21 (MNAVIVLCVTISAVLIHQCYS) is a signal peptide. 3 disulfides stabilise this stretch: C35/C59, C40/C61, and C55/C76.

The protein belongs to the RaCI family. Expressed in salivary glands.

The protein localises to the secreted. Functionally, complement inhibitor. Prevents complement-mediated C5 activation by binding to C5. Binds C5 at a different binding site than the other tick complement inhibitors OmCI and CirpT1, and the drug eculizumab. The sequence is that of Complement inhibitor RaCI5 from Rhipicephalus appendiculatus (Brown ear tick).